A 505-amino-acid chain; its full sequence is Lysine--tRNA ligase (505 aa).

Residues Glu415 and Glu422 each contribute to the Mg(2+) site.

The protein belongs to the class-II aminoacyl-tRNA synthetase family. Homodimer. It depends on Mg(2+) as a cofactor.

The protein localises to the cytoplasm. The catalysed reaction is tRNA(Lys) + L-lysine + ATP = L-lysyl-tRNA(Lys) + AMP + diphosphate. This is Lysine--tRNA ligase from Edwardsiella ictaluri (strain 93-146).